The sequence spans 953 residues: Mannosylglycoprotein endo-beta-mannosidase (953 aa).

The Proton donor role is filled by Glu461. Residue Glu553 is the Nucleophile of the active site.

It belongs to the glycosyl hydrolase 2 family. In terms of assembly, heterotrimer of 31 kDa, 28 kDa and 42 kDa subunits. The mature enzyme is proteotically cleaved into 3 subunits of 31 kDa, 28 kDa and 42 kDa. Ubiquitously expressed.

The catalysed reaction is Hydrolysis of the alpha-D-mannosyl-(1-&gt;6)-beta-D-mannosyl-(1-&gt;4)-N-acetyl-beta-D-glucosaminyl-(1-&gt;4)-N-acetyl-beta-D-glucosaminyl sequence of glycoprotein to alpha-D-mannosyl-(1-&gt;6)-D-mannose and N-acetyl-beta-D-glucosaminyl-(1-&gt;4)-N-acetyl-beta-D-glucosaminyl sequences.. Its function is as follows. Glycosidase that specifically hydrolyzes the Man-beta-1,4-GlcNAc linkage in the trimannosyl core structure of N-glycans. Does not hydrolyzes pyridylamino derivatives sugar chains containing Man-alpha-1,3-Man-beta or Xylose-beta-1,2-Man-beta. This is Mannosylglycoprotein endo-beta-mannosidase (EBM) from Lilium longiflorum (Trumpet lily).